The sequence spans 294 residues: Ribosomal RNA small subunit methyltransferase H (294 aa).

S-adenosyl-L-methionine-binding positions include 36–38, Asp-55, Phe-82, Asp-97, and Gln-104; that span reads GGH.

It belongs to the methyltransferase superfamily. RsmH family.

The protein localises to the cytoplasm. It carries out the reaction cytidine(1402) in 16S rRNA + S-adenosyl-L-methionine = N(4)-methylcytidine(1402) in 16S rRNA + S-adenosyl-L-homocysteine + H(+). Functionally, specifically methylates the N4 position of cytidine in position 1402 (C1402) of 16S rRNA. This is Ribosomal RNA small subunit methyltransferase H from Synechococcus sp. (strain CC9605).